The primary structure comprises 312 residues: Polyamine aminopropyltransferase (312 aa).

One can recognise a PABS domain in the interval 7-247 (FFWAQEYFTP…GPLGFALAAQ (241 aa)). Glutamine 36 serves as a coordination point for S-methyl-5'-thioadenosine. Residues histidine 67 and glutamate 95 each contribute to the spermidine site. Residues aspartate 115 and 147–148 (DA) each bind S-methyl-5'-thioadenosine. Catalysis depends on aspartate 165, which acts as the Proton acceptor. Proline 174 contributes to the S-methyl-5'-thioadenosine binding site.

Belongs to the spermidine/spermine synthase family. In terms of assembly, homodimer or homotetramer.

It is found in the cytoplasm. It carries out the reaction S-adenosyl 3-(methylsulfanyl)propylamine + putrescine = S-methyl-5'-thioadenosine + spermidine + H(+). It participates in amine and polyamine biosynthesis; spermidine biosynthesis; spermidine from putrescine: step 1/1. In terms of biological role, catalyzes the irreversible transfer of a propylamine group from the amino donor S-adenosylmethioninamine (decarboxy-AdoMet) to putrescine (1,4-diaminobutane) to yield spermidine. The chain is Polyamine aminopropyltransferase from Synechococcus sp. (strain JA-3-3Ab) (Cyanobacteria bacterium Yellowstone A-Prime).